The chain runs to 119 residues: Large ribosomal subunit protein bL20 (119 aa).

This sequence belongs to the bacterial ribosomal protein bL20 family.

In terms of biological role, binds directly to 23S ribosomal RNA and is necessary for the in vitro assembly process of the 50S ribosomal subunit. It is not involved in the protein synthesizing functions of that subunit. This is Large ribosomal subunit protein bL20 from Streptococcus pyogenes serotype M1.